Here is a 116-residue protein sequence, read N- to C-terminus: Small ribosomal subunit protein uS13 (116 aa).

The interval 92 to 116 (RRGLPVRGQNTKNNARTRKGTKRNR) is disordered. Residues 106-116 (ARTRKGTKRNR) show a composition bias toward basic residues.

The protein belongs to the universal ribosomal protein uS13 family. Part of the 30S ribosomal subunit. Forms a loose heterodimer with protein S19. Forms two bridges to the 50S subunit in the 70S ribosome.

Functionally, located at the top of the head of the 30S subunit, it contacts several helices of the 16S rRNA. In the 70S ribosome it contacts the 23S rRNA (bridge B1a) and protein L5 of the 50S subunit (bridge B1b), connecting the 2 subunits; these bridges are implicated in subunit movement. Contacts the tRNAs in the A and P-sites. The protein is Small ribosomal subunit protein uS13 of Lactobacillus acidophilus (strain ATCC 700396 / NCK56 / N2 / NCFM).